The primary structure comprises 106 residues: UPF0145 protein VCM66_A0911 (106 aa).

It belongs to the UPF0145 family.

In Vibrio cholerae serotype O1 (strain M66-2), this protein is UPF0145 protein VCM66_A0911.